A 350-amino-acid chain; its full sequence is Biotin synthase (350 aa).

In terms of domain architecture, Radical SAM core spans 38–256 (NYVQVSTLLS…IAVARIMMPT (219 aa)). Residues C53, C57, and C60 each contribute to the [4Fe-4S] cluster site. The [2Fe-2S] cluster site is built by C97, C128, C188, and R260.

This sequence belongs to the radical SAM superfamily. Biotin synthase family. As to quaternary structure, homodimer. [4Fe-4S] cluster serves as cofactor. It depends on [2Fe-2S] cluster as a cofactor.

The catalysed reaction is (4R,5S)-dethiobiotin + (sulfur carrier)-SH + 2 reduced [2Fe-2S]-[ferredoxin] + 2 S-adenosyl-L-methionine = (sulfur carrier)-H + biotin + 2 5'-deoxyadenosine + 2 L-methionine + 2 oxidized [2Fe-2S]-[ferredoxin]. It participates in cofactor biosynthesis; biotin biosynthesis; biotin from 7,8-diaminononanoate: step 2/2. Its function is as follows. Catalyzes the conversion of dethiobiotin (DTB) to biotin by the insertion of a sulfur atom into dethiobiotin via a radical-based mechanism. In Vibrio vulnificus (strain CMCP6), this protein is Biotin synthase.